The primary structure comprises 194 residues: Inner membrane-spanning protein YciB (194 aa).

5 consecutive transmembrane segments (helical) span residues 3-23 (LFIE…AGIY), 47-67 (IPAK…LTIY), 76-96 (WKVT…NTFF), 119-139 (LNLA…YIAF), and 149-169 (FKVF…ILFL).

This sequence belongs to the YciB family.

It localises to the cell inner membrane. Functionally, plays a role in cell envelope biogenesis, maintenance of cell envelope integrity and membrane homeostasis. The sequence is that of Inner membrane-spanning protein YciB from Colwellia psychrerythraea (strain 34H / ATCC BAA-681) (Vibrio psychroerythus).